Here is a 91-residue protein sequence, read N- to C-terminus: Dynein light chain 1, cytoplasmic (91 aa).

Belongs to the dynein light chain family. In terms of assembly, homodimer. Cytoplasmic dynein consists of two catalytic heavy chains (HCs) and a number of non-catalytic subunits which present intermediate chains (ICs), light intermediate chains (LICs) and light chains (LCs). Component of the nuclear pore complex (NPC). NPC constitutes the exclusive means of nucleocytoplasmic transport. NPCs allow the passive diffusion of ions and small molecules and the active, nuclear transport receptor-mediated bidirectional transport of macromolecules such as proteins, RNAs, ribonucleoparticles (RNPs), and ribosomal subunits across the nuclear envelope. Due to its 8-fold rotational symmetry, all subunits are present with 8 copies or multiples thereof.

Its subcellular location is the cytoplasm. The protein resides in the cytoskeleton. It localises to the nucleus. The protein localises to the nuclear pore complex. Its function is as follows. Acts as one of several non-catalytic accessory components of the cytoplasmic dynein complex that are thought to be involved in linking dynein to cargos and to adapter proteins that regulate dynein function. Cytoplasmic dynein 1 acts as a motor for the intracellular retrograde motility of vesicles and organelles along microtubules. May play a role in changing or maintaining the spatial distribution of cytoskeletal structures. Also a component of the nuclear pore complex. The polypeptide is Dynein light chain 1, cytoplasmic (DYN2) (Debaryomyces hansenii (strain ATCC 36239 / CBS 767 / BCRC 21394 / JCM 1990 / NBRC 0083 / IGC 2968) (Yeast)).